The following is a 101-amino-acid chain: Large ribosomal subunit protein uL23c (101 aa).

Belongs to the universal ribosomal protein uL23 family. As to quaternary structure, part of the 50S ribosomal subunit.

It localises to the plastid. Its subcellular location is the chloroplast. Its function is as follows. Binds to 23S rRNA. The sequence is that of Large ribosomal subunit protein uL23c (rpl23) from Cyanidium caldarium (Red alga).